The following is a 139-amino-acid chain: Cystatin (139 aa).

Residues 1–23 (MAGARGCVVLLAAALMLVGAVLG) form the signal peptide. The short motif at 76–80 (QLVSG) is the Secondary area of contact element. 2 disulfides stabilise this stretch: cysteine 94-cysteine 104 and cysteine 118-cysteine 138. Position 103 is a phosphoserine (serine 103).

Belongs to the cystatin family.

It is found in the secreted. This protein binds tightly to and inhibits a variety of thiol proteases including ficin, papain, and cathepsins B, C, H, and L. Although isolated from egg white, it is also present in serum. The protein is Cystatin of Gallus gallus (Chicken).